A 316-amino-acid polypeptide reads, in one-letter code: D-alanine--D-alanine ligase (316 aa).

Residues 108–310 (ERYEELSVVK…FDELVDLIIK (203 aa)) form the ATP-grasp domain. Residue 138 to 193 (EEKIGLPCVVKPRKEGSSIGTHICFSKEELLDALKNEFKNYDEMIVQEYIKGKEIT) participates in ATP binding. Residues Asp265, Glu277, and Asn279 each contribute to the Mg(2+) site.

Belongs to the D-alanine--D-alanine ligase family. Requires Mg(2+) as cofactor. Mn(2+) is required as a cofactor.

Its subcellular location is the cytoplasm. The enzyme catalyses 2 D-alanine + ATP = D-alanyl-D-alanine + ADP + phosphate + H(+). The protein operates within cell wall biogenesis; peptidoglycan biosynthesis. In terms of biological role, cell wall formation. The polypeptide is D-alanine--D-alanine ligase (Fervidobacterium nodosum (strain ATCC 35602 / DSM 5306 / Rt17-B1)).